A 428-amino-acid polypeptide reads, in one-letter code: Putative UDP-glucose 6-dehydrogenase YtcA (428 aa).

Residues 1 to 23 (MKICVVGAGYVGLTLSAALASIG) form the signal peptide. Residues 2–19 (KICV…SAAL), Val-11, Asp-30, Lys-35, Thr-118, and Glu-152 each bind NAD(+). Substrate contacts are provided by residues 148–152 (EFLRE), Lys-203, Asn-207, 248–252 (FLQAG), and Gly-256. Cys-259 serves as the catalytic Nucleophile. Lys-262 is an NAD(+) binding site. Lys-319 is a substrate binding site. Arg-326 is an NAD(+) binding site.

It belongs to the UDP-glucose/GDP-mannose dehydrogenase family.

It carries out the reaction UDP-alpha-D-glucose + 2 NAD(+) + H2O = UDP-alpha-D-glucuronate + 2 NADH + 3 H(+). It functions in the pathway nucleotide-sugar biosynthesis; UDP-alpha-D-glucuronate biosynthesis; UDP-alpha-D-glucuronate from UDP-alpha-D-glucose: step 1/1. Functionally, catalyzes the conversion of UDP-glucose into UDP-glucuronate, one of the precursors of teichuronic acid. The polypeptide is Putative UDP-glucose 6-dehydrogenase YtcA (ytcA) (Bacillus subtilis (strain 168)).